Here is a 550-residue protein sequence, read N- to C-terminus: Hydroxylamine reductase (550 aa).

[2Fe-2S] cluster is bound by residues C3, C6, C18, and C25. Hybrid [4Fe-2O-2S] cluster is bound by residues H249, E273, C317, C405, C433, C458, E492, and K494. C405 bears the Cysteine persulfide mark.

Belongs to the HCP family. [2Fe-2S] cluster is required as a cofactor. Hybrid [4Fe-2O-2S] cluster serves as cofactor.

The protein localises to the cytoplasm. The catalysed reaction is A + NH4(+) + H2O = hydroxylamine + AH2 + H(+). Catalyzes the reduction of hydroxylamine to form NH(3) and H(2)O. In Shigella flexneri serotype 5b (strain 8401), this protein is Hydroxylamine reductase.